Consider the following 782-residue polypeptide: E3 ubiquitin-protein ligase SopA (782 aa).

Residues 137-171 are disordered; sequence VSVSANNRPTVSEGRTPPVSPSLSLQATSSPSSPA. Low complexity predominate over residues 157–171; it reads PSLSLQATSSPSSPA. The active-site Glycyl thioester intermediate is cysteine 753.

This sequence belongs to the SopA E3 ligase family. Post-translationally, ubiquitinated in the presence of host E1 ubiquitin-activating enzyme, E2 ubiquitin-conjugating enzyme and ubiquitin.

It localises to the secreted. It is found in the host cell. The catalysed reaction is S-ubiquitinyl-[E2 ubiquitin-conjugating enzyme]-L-cysteine + [acceptor protein]-L-lysine = [E2 ubiquitin-conjugating enzyme]-L-cysteine + N(6)-ubiquitinyl-[acceptor protein]-L-lysine.. Functionally, effector proteins function to alter host cell physiology and promote bacterial survival in host tissues. This protein is an E3 ubiquitin ligase that interferes with host's ubiquitination pathway. The polypeptide is E3 ubiquitin-protein ligase SopA (sopA) (Salmonella enteritidis PT4 (strain P125109)).